The primary structure comprises 103 residues: Seminal ribonuclease (103 aa).

Disulfide bonds link Cys-12–Cys-70, Cys-26–Cys-81, Cys-44–Cys-96, and Cys-51–Cys-58. Substrate is bound by residues Lys-27–Thr-31, Lys-52, and Arg-71.

It belongs to the pancreatic ribonuclease family. As to quaternary structure, homodimer; disulfide-linked.

It localises to the secreted. It catalyses the reaction an [RNA] containing cytidine + H2O = an [RNA]-3'-cytidine-3'-phosphate + a 5'-hydroxy-ribonucleotide-3'-[RNA].. The catalysed reaction is an [RNA] containing uridine + H2O = an [RNA]-3'-uridine-3'-phosphate + a 5'-hydroxy-ribonucleotide-3'-[RNA].. This enzyme hydrolyzes both single- and double-stranded RNA. This chain is Seminal ribonuclease (SRN), found in Cephalophus silvicultor (Yellow-backed duiker).